A 208-amino-acid polypeptide reads, in one-letter code: Uracil phosphoribosyltransferase (208 aa).

5-phospho-alpha-D-ribose 1-diphosphate-binding positions include arginine 78, arginine 103, and 130 to 138 (DPMLATANS). Uracil is bound by residues isoleucine 193 and 198-200 (GDA). Aspartate 199 contacts 5-phospho-alpha-D-ribose 1-diphosphate.

It belongs to the UPRTase family. The cofactor is Mg(2+).

The enzyme catalyses UMP + diphosphate = 5-phospho-alpha-D-ribose 1-diphosphate + uracil. It participates in pyrimidine metabolism; UMP biosynthesis via salvage pathway; UMP from uracil: step 1/1. Allosterically activated by GTP. In terms of biological role, catalyzes the conversion of uracil and 5-phospho-alpha-D-ribose 1-diphosphate (PRPP) to UMP and diphosphate. The chain is Uracil phosphoribosyltransferase from Brucella ovis (strain ATCC 25840 / 63/290 / NCTC 10512).